A 614-amino-acid chain; its full sequence is UvrABC system protein C (614 aa).

Positions 12-91 (ESPGVYLMKG…IKKHRPRYNL (80 aa)) constitute a GIY-YIG domain. Residues 201–236 (RDLLKTYRERMASAAANERYEEAARYRDLIRAIEVT) form the UVR domain.

Belongs to the UvrC family. In terms of assembly, interacts with UvrB in an incision complex.

The protein resides in the cytoplasm. Its function is as follows. The UvrABC repair system catalyzes the recognition and processing of DNA lesions. UvrC both incises the 5' and 3' sides of the lesion. The N-terminal half is responsible for the 3' incision and the C-terminal half is responsible for the 5' incision. The sequence is that of UvrABC system protein C from Geobacter metallireducens (strain ATCC 53774 / DSM 7210 / GS-15).